The following is a 591-amino-acid chain: Aspartate--tRNA(Asp/Asn) ligase (591 aa).

E175 is an L-aspartate binding site. Positions 199–202 (QQFK) are aspartate. 2 residues coordinate L-aspartate: R221 and H453. Residue 221–223 (RDE) participates in ATP binding. E486 lines the ATP pocket. R493 serves as a coordination point for L-aspartate. 538-541 (GIDR) contacts ATP.

It belongs to the class-II aminoacyl-tRNA synthetase family. Type 1 subfamily. In terms of assembly, homodimer.

It localises to the cytoplasm. It catalyses the reaction tRNA(Asx) + L-aspartate + ATP = L-aspartyl-tRNA(Asx) + AMP + diphosphate. In terms of biological role, aspartyl-tRNA synthetase with relaxed tRNA specificity since it is able to aspartylate not only its cognate tRNA(Asp) but also tRNA(Asn). Reaction proceeds in two steps: L-aspartate is first activated by ATP to form Asp-AMP and then transferred to the acceptor end of tRNA(Asp/Asn). The protein is Aspartate--tRNA(Asp/Asn) ligase of Cereibacter sphaeroides (strain KD131 / KCTC 12085) (Rhodobacter sphaeroides).